The following is a 1378-amino-acid chain: Protein CLASP-1 (1378 aa).

Residues 168–206 (LIPQLCRLTNDPNSEVRDVSTQCLIDLMVYGGKPIVAKI) form an HEAT 1 repeat. 3 disordered regions span residues 231-254 (RGDL…RNSL), 266-325 (IHPS…TRSS), and 590-725 (MLRD…HQTP). Low complexity-rich tracts occupy residues 269–283 (SAST…RLST) and 610–619 (NQKQQPNQQN). 2 stretches are compositionally biased toward polar residues: residues 620–630 (ISQKFLSQRSA) and 637–648 (IQLSVKPQTTAI). Low complexity predominate over residues 664–676 (SSTSTSFSAVRSS). Positions 677-690 (GYGQNQSTTPNRAK) are enriched in polar residues. A compositionally biased stretch (low complexity) spans 704-721 (TNGNNNNKSSSSSPSTST). A coiled-coil region spans residues 740–767 (ASLTQEQANCLQNAMNTAKDEMSKNNED). A compositionally biased stretch (basic and acidic residues) spans 775–784 (IRKTPPKEVP). The tract at residues 775–823 (IRKTPPKEVPRSYNNSPFKPSNLDSSVHRSYNNNSPFRPSSGSVGSGSN) is disordered. A compositionally biased stretch (polar residues) spans 786–812 (SYNNSPFKPSNLDSSVHRSYNNNSPFR). The stretch at 1305-1341 (HLIVNDVAPCFVTAYESMSSTVRKCAVFGLVALVQRV) is one HEAT 2 repeat.

The protein belongs to the CLASP family.

It localises to the cytoplasm. It is found in the cytoskeleton. Microtubule plus-end tracking protein that promotes the stabilization of dynamic microtubules. Operates redundantly with cls-2 and cls-3 in regulating microtubule processes which position the spindle during asymmetric cell division. The polypeptide is Protein CLASP-1 (cls-1) (Caenorhabditis elegans).